The primary structure comprises 787 residues: DNA ligase (787 aa).

NAD(+) contacts are provided by residues 32 to 36, 81 to 82, and Glu-121; these read DVEYD and SL. Catalysis depends on Lys-123, which acts as the N6-AMP-lysine intermediate. NAD(+) is bound by residues Arg-144, Glu-181, Lys-297, and Lys-321. Positions 415, 418, 445, and 451 each coordinate Zn(2+). Positions 703–787 constitute a BRCT domain; it reads VEGLPLAGQT…RLTELGVAVD (85 aa).

It belongs to the NAD-dependent DNA ligase family. LigA subfamily. Mg(2+) is required as a cofactor. It depends on Mn(2+) as a cofactor.

It catalyses the reaction NAD(+) + (deoxyribonucleotide)n-3'-hydroxyl + 5'-phospho-(deoxyribonucleotide)m = (deoxyribonucleotide)n+m + AMP + beta-nicotinamide D-nucleotide.. In terms of biological role, DNA ligase that catalyzes the formation of phosphodiester linkages between 5'-phosphoryl and 3'-hydroxyl groups in double-stranded DNA using NAD as a coenzyme and as the energy source for the reaction. It is essential for DNA replication and repair of damaged DNA. This chain is DNA ligase, found in Pseudomonas savastanoi pv. phaseolicola (strain 1448A / Race 6) (Pseudomonas syringae pv. phaseolicola (strain 1448A / Race 6)).